Here is a 757-residue protein sequence, read N- to C-terminus: RNA-directed RNA polymerase catalytic subunit (757 aa).

The tract at residues 53–82 is disordered; it reads GRWTKNTETGAPQLNPIDGPLPKDNEPSGY. 2 short sequence motifs (nuclear localization signal) span residues 187-195 and 203-216; these read RKRRVRDNV and RTIGKKKHKLDKRS. Positions 249–256 are promoter-binding site; that stretch reads RGFVYFVE. One can recognise a RdRp catalytic domain in the interval 286–483; that stretch reads VRKMMTNSQD…GINMSKKKSY (198 aa).

This sequence belongs to the influenza viruses polymerase PB1 family. Influenza RNA polymerase is composed of three subunits: PB1, PB2 and PA. Interacts (via N-terminus) with PA (via C-terminus). Interacts (via C-terminus) with PB2 (via N-terminus); this interaction is essential for transcription initiation. Interacts (via C-terminus) with human PKP2 (via N-terminus); the interaction competitively inhibits the interaction between the RNA polymerase subunits PB1 and PB2. Post-translationally, phosphorylated by host PRKCA.

The protein resides in the host nucleus. It localises to the host cytoplasm. It carries out the reaction RNA(n) + a ribonucleoside 5'-triphosphate = RNA(n+1) + diphosphate. In terms of biological role, RNA-dependent RNA polymerase which is responsible for replication and transcription of virus RNA segments. The transcription of viral mRNAs occurs by a unique mechanism called cap-snatching. 5' methylated caps of cellular mRNAs are cleaved after 10-13 nucleotides by PA. In turn, these short capped RNAs are used as primers by PB1 for transcription of viral mRNAs. During virus replication, PB1 initiates RNA synthesis and copy vRNA into complementary RNA (cRNA) which in turn serves as a template for the production of more vRNAs. The chain is RNA-directed RNA polymerase catalytic subunit from Influenza A virus (strain A/USA:Memphis/10/1996 H1N1).